The chain runs to 867 residues: Bifunctional isopimaradiene synthase, chloroplastic (867 aa).

A chloroplast-targeting transit peptide spans 1 to 68; that stretch reads MALLSSSLSS…VGEGTTSLPY (68 aa). Residue Lys267 coordinates substrate. Residues Asp400 and Asp402 each coordinate Mg(2+). A DXDD motif motif is present at residues 400–403; it reads DIDD. Lys487 lines the substrate pocket. Asp619, Asp623, Asn763, Thr767, and Glu771 together coordinate Mg(2+). The DDXXD motif motif lies at 619-623; it reads DDLYD.

Belongs to the terpene synthase family. Tpsd subfamily. The cofactor is Mg(2+).

The protein localises to the plastid. The protein resides in the chloroplast. The enzyme catalyses (2E,6E,10E)-geranylgeranyl diphosphate = (+)-copalyl diphosphate. The catalysed reaction is (+)-copalyl diphosphate = isopimara-7,15-diene + diphosphate. The protein operates within terpene metabolism; oleoresin biosynthesis. Its function is as follows. Involved in defensive oleoresin formation in conifers in response to insect attack or other injury. Involved in diterpene (C20) olefins biosynthesis. Bifunctional enzyme that catalyzes two sequential cyclizations of geranylgeranyl diphosphate (GGPP) to isopimara-7,15-diene. The polypeptide is Bifunctional isopimaradiene synthase, chloroplastic (TPS-ISO) (Picea abies (Norway spruce)).